The chain runs to 861 residues: Translation initiation factor IF-2 (861 aa).

Disordered stretches follow at residues 1–69 and 92–273; these read MSDA…GESA and ARAR…GREK. A compositionally biased stretch (gly residues) spans 53–65; it reads GGPGGKQGGGAKG. Over residues 94-108 the composition is skewed to basic and acidic residues; it reads ARAEAADREAQKKQD. Over residues 109 to 120 the composition is skewed to low complexity; the sequence is AAAMAQRAASEQ. Composition is skewed to basic and acidic residues over residues 121 to 155 and 163 to 186; these read RQLE…KAEA and DSGR…KRTP. Residues 213–223 are compositionally biased toward low complexity; it reads PGPAAKQQPAR. Over residues 255-273 the composition is skewed to basic and acidic residues; sequence RAREREKQRRQDTSGGREK. A tr-type G domain is found at 357–527; it reads PRAPVIAVMG…ALQAELLDLK (171 aa). Residues 366–373 are G1; that stretch reads GHVDHGKT. 366-373 contacts GTP; that stretch reads GHVDHGKT. The segment at 391–395 is G2; sequence GITQH. Residues 413–416 are G3; that stretch reads DTPG. GTP is bound by residues 413 to 417 and 467 to 470; these read DTPGH and NKCD. The G4 stretch occupies residues 467–470; that stretch reads NKCD. The tract at residues 503 to 505 is G5; sequence SAK.

Belongs to the TRAFAC class translation factor GTPase superfamily. Classic translation factor GTPase family. IF-2 subfamily.

Its subcellular location is the cytoplasm. Functionally, one of the essential components for the initiation of protein synthesis. Protects formylmethionyl-tRNA from spontaneous hydrolysis and promotes its binding to the 30S ribosomal subunits. Also involved in the hydrolysis of GTP during the formation of the 70S ribosomal complex. The protein is Translation initiation factor IF-2 of Maricaulis maris (strain MCS10) (Caulobacter maris).